The following is a 496-amino-acid chain: Probable glycine betaine transporter (496 aa).

Helical transmembrane passes span 11–31, 49–69, 89–109, 136–156, 188–208, 219–239, 260–280, 306–326, 341–361, 396–416, 441–461, and 468–488; these read TVLY…VFLP, FGWL…GIAI, FQWF…FWSV, VVFF…GLAL, AIDI…LGLG, IWGI…ITVI, VWLS…VFIL, WVGG…PFVG, FVFA…AIYG, LYAI…VGAA, FWGI…GTAA, and ASIA…YSIL.

It belongs to the BCCT transporter (TC 2.A.15) family.

It is found in the cell membrane. Probably acts in the uptake of glycine betaine. May function in the pathway that allows anaerobic methylotrophic growth of D.hafniense using glycine betaine. The sequence is that of Probable glycine betaine transporter from Desulfitobacterium hafniense (strain Y51).